The following is a 60-amino-acid chain: Large ribosomal subunit protein uL30 (60 aa).

This sequence belongs to the universal ribosomal protein uL30 family. Part of the 50S ribosomal subunit.

In Bacillus anthracis (strain A0248), this protein is Large ribosomal subunit protein uL30.